A 252-amino-acid polypeptide reads, in one-letter code: Triosephosphate isomerase (252 aa).

A substrate-binding site is contributed by 9 to 11 (NWK). Catalysis depends on H95, which acts as the Electrophile. The active-site Proton acceptor is the E167. Residues G173, S213, and 234 to 235 (GG) each bind substrate.

Belongs to the triosephosphate isomerase family. As to quaternary structure, homodimer.

The protein resides in the cytoplasm. It carries out the reaction D-glyceraldehyde 3-phosphate = dihydroxyacetone phosphate. It participates in carbohydrate biosynthesis; gluconeogenesis. Its pathway is carbohydrate degradation; glycolysis; D-glyceraldehyde 3-phosphate from glycerone phosphate: step 1/1. In terms of biological role, involved in the gluconeogenesis. Catalyzes stereospecifically the conversion of dihydroxyacetone phosphate (DHAP) to D-glyceraldehyde-3-phosphate (G3P). This chain is Triosephosphate isomerase, found in Syntrophotalea carbinolica (strain DSM 2380 / NBRC 103641 / GraBd1) (Pelobacter carbinolicus).